A 705-amino-acid chain; its full sequence is Solute carrier family 28 member 3 (705 aa).

Residues 1–21 (MSRSDPDPGKNSEPSKSKMSL) are compositionally biased toward basic and acidic residues. Residues 1–96 (MSRSDPDPGK…TEEESEDERQ (96 aa)) form a disordered region. The Cytoplasmic segment spans residues 1-119 (MSRSDPDPGK…FCRKHRVILQ (119 aa)). Polar residues predominate over residues 48–63 (APGNSTVRSRVVQSGE). The span at 65–74 (GRAKQDDRQI) shows a compositional bias: basic and acidic residues. A helical membrane pass occupies residues 120-140 (HTIWAVLLTGFLALVIAACAL). Residues 141–145 (NFHRA) lie on the Extracellular side of the membrane. A helical transmembrane segment spans residues 146 to 166 (LPLFVITLVTIFFVVWDRLMA). The Cytoplasmic portion of the chain corresponds to 167 to 190 (KYEQRIDDVLSPGKRLLERHWFWL). The helical transmembrane segment at 191 to 211 (KWVVWCSLILAVILWLALDTA) threads the bilayer. The Extracellular portion of the chain corresponds to 212–214 (RLG). The chain crosses the membrane as a helical span at residues 215 to 236 (QQQLISFGGLVMYIVLLFLFSK). The Cytoplasmic segment spans residues 237 to 244 (HPTRVYWR). A helical transmembrane segment spans residues 245–264 (PVFWGIGLQFLLGLLILRTR). Over 265 to 301 (PGFVAFDWMGKQVQTFLGYTDAGAQFVFGEKYTDHFF) the chain is Extracellular. A helical transmembrane segment spans residues 302-322 (AFKILPIVVFFSTVMSMLYYL). The Cytoplasmic portion of the chain corresponds to 323–346 (GLMQWIIRKVGWLMLVTMGSSPIE). Residues 347–365 (SVVAAGNIFVGQTESPLLV) constitute an intramembrane region (helical). Residues 366-378 (QPYLPHVTKSELH) are Cytoplasmic-facing. The helical transmembrane segment at 379–401 (TIMTAGFATIAGSVLGAYISFGV) threads the bilayer. At 402-403 (SS) the chain is on the extracellular side. The chain crosses the membrane as a helical span at residues 404–425 (THLLTASVMSAPAALAVAKLFW). The Cytoplasmic segment spans residues 426–460 (PETEKPKITLKNAMKMENGDSRNLLEAATQGASSS). A helical membrane pass occupies residues 461 to 486 (IPLVANIAANLIAFLALLSFVNSALS). Over 487 to 524 (WFGSMFDYPQLSFELICSYIFMPFSFMMGVDWQDRFMV) the chain is Extracellular. The helical intramembrane region spans 525 to 544 (AKLIGYKTFFNEFVAYEHLS). The Extracellular segment spans residues 545–583 (KFINLRKAAGPKFVNGVQQYMSIRSETIATYALCGFANF). A helical membrane pass occupies residues 584–594 (GSLGIVIGGLT). Residues 595 to 607 (SIAPSRKRDIASG) are Cytoplasmic-facing. A helical membrane pass occupies residues 608 to 630 (AMRALIAGTIACFMTACIAGMLS). The Extracellular segment spans residues 631–705 (DTPVAINCHH…LNCGWIPNIP (75 aa)).

The protein belongs to the concentrative nucleoside transporter (CNT) (TC 2.A.41) family. In terms of assembly, homotrimer. As to expression, expressed in kidney; in the proximal tubule, glomerulus and cortical collecting duct.

It is found in the cell membrane. The catalysed reaction is thymidine(out) + 2 Na(+)(out) = thymidine(in) + 2 Na(+)(in). The enzyme catalyses cytidine(out) + 2 Na(+)(out) = cytidine(in) + 2 Na(+)(in). It carries out the reaction uridine(out) + 2 Na(+)(out) = uridine(in) + 2 Na(+)(in). It catalyses the reaction adenosine(out) + 2 Na(+)(out) = adenosine(in) + 2 Na(+)(in). The catalysed reaction is guanosine(out) + 2 Na(+)(out) = guanosine(in) + 2 Na(+)(in). The enzyme catalyses inosine(out) + 2 Na(+)(out) = inosine(in) + 2 Na(+)(in). In terms of biological role, sodium-dependent, pyrimidine- and purine-selective. Involved in the homeostasis of endogenous nucleosides. Exhibits the transport characteristics of the nucleoside transport system cib or N3 subtype (N3/cib) (with marked transport of both thymidine and inosine). Employs a 2:1 sodium/nucleoside ratio. Also able to transport gemcitabine, 3'-azido-3'-deoxythymidine (AZT), ribavirin and 3-deazauridine. The chain is Solute carrier family 28 member 3 (Slc28a3) from Rattus norvegicus (Rat).